Consider the following 223-residue polypeptide: Membrane protein (223 aa).

Residues 1–18 (MAENCTLDSEQAVLLFKE) lie on the Virion surface side of the membrane. Residues 19–39 (YNLFITAFLLFLTILLQYGYA) traverse the membrane as a helical segment. The Intravirion portion of the chain corresponds to 40-49 (TRSRTIYILK). Residues 50 to 70 (MIVLWCFWPLNIAVGVISCIY) form a helical membrane-spanning segment. Topologically, residues 71 to 75 (PPNTG) are virion surface. A helical transmembrane segment spans residues 76–96 (GLVAAIILTVFACLSFVGYWI). The Intravirion portion of the chain corresponds to 97–223 (QSCRLFKRCR…VATGGSSLYT (127 aa)).

Belongs to the gammacoronaviruses M protein family. In terms of assembly, homomultimer. Interacts with envelope E protein in the budding compartment of the host cell, which is located between endoplasmic reticulum and the Golgi complex. Forms a complex with HE and S proteins. Interacts with nucleocapsid N protein. This interaction probably participates in RNA packaging into the virus.

Its subcellular location is the virion membrane. The protein localises to the host Golgi apparatus membrane. Component of the viral envelope that plays a central role in virus morphogenesis and assembly via its interactions with other viral proteins. This chain is Membrane protein, found in Gallus gallus (Chicken).